The chain runs to 74 residues: UPF0235 protein tsr1994 (74 aa).

It belongs to the UPF0235 family.

In Thermosynechococcus vestitus (strain NIES-2133 / IAM M-273 / BP-1), this protein is UPF0235 protein tsr1994.